We begin with the raw amino-acid sequence, 2510 residues long: Highly reducing polyketide synthase g433 (2510 aa).

Residues 1–54 (MAPGRTDVTVAENGNGLHTAHNGVSNGTSNGTNGTSHTSNGTNSSAKTTSNGVH) form a disordered region. Residues 22 to 45 (NGVSNGTSNGTNGTSHTSNGTNSS) are compositionally biased toward low complexity. Residues 58–477 (DIPIAIVGMG…GANAHAVIDS (420 aa)) form the Ketosynthase family 3 (KS3) domain. Active-site for beta-ketoacyl synthase activity residues include C229, H365, and H400. The malonyl-CoA:ACP transacylase (MAT) domain stretch occupies residues 574 to 880 (FVFTGQGAQW…VPTLVRGQND (307 aa)). Residues 942 to 1070 (HDLLGCQVFE…GQVKAGRADS (129 aa)) form an N-terminal hotdog fold region. The dehydratase (DH) domain stretch occupies residues 942–1226 (HDLLGCQVFE…NLRLAPAADD (285 aa)). Residues 942-1229 (HDLLGCQVFE…LAPAADDTGG (288 aa)) form the PKS/mFAS DH domain. Residue H974 is the Proton acceptor; for dehydratase activity of the active site. The segment at 1083–1229 (PRKVSSTRWY…LAPAADDTGG (147 aa)) is C-terminal hotdog fold. The Proton donor; for dehydratase activity role is filled by D1144. The tract at residues 1395-1574 (DFLGLVSHDK…FDGAEAVIYD (180 aa)) is methyltransferase (CMet) domain. The tract at residues 1787–2097 (GSLKTLRWVQ…KGQHMGKLVI (311 aa)) is enoyl reductase (ER) (ER) domain. A ketoreductase (KR) domain region spans residues 2122-2296 (SYLLVGGLGG…ASVLDISIIE (175 aa)). One can recognise a Carrier domain in the interval 2419–2496 (SSVSFLANEI…KLGEAAAEGL (78 aa)). At S2456 the chain carries O-(pantetheine 4'-phosphoryl)serine.

It participates in mycotoxin biosynthesis. Functionally, highly reducing polyketide synthase; part of the gene cluster that mediates the biosynthesis of 1233A, a natural compound known as an inhibitor of HMG-CoA synthase in the mevalonate pathway and with antibacterial and antifungal activities. The highly reducing polyketide synthase g433 gene is responsible for the 1233A backbone biosynthesis and the cytochrome P450 monooxygenase g430 catalyzes oxidation of the backbone. This is Highly reducing polyketide synthase g433 from Fusarium sp.